The sequence spans 962 residues: Integrator complex subunit 7 (962 aa).

A phosphoserine mark is found at S338 and S809.

This sequence belongs to the Integrator subunit 7 family. Component of the Integrator complex, composed of core subunits INTS1, INTS2, INTS3, INTS4, INTS5, INTS6, INTS7, INTS8, INTS9/RC74, INTS10, INTS11/CPSF3L, INTS12, INTS13, INTS14 and INTS15. The core complex associates with protein phosphatase 2A subunits PPP2CA and PPP2R1A, to form the Integrator-PP2A (INTAC) complex. Interacts with NABP2.

The protein resides in the nucleus. It localises to the chromosome. It is found in the cytoplasm. In terms of biological role, component of the integrator complex, a multiprotein complex that terminates RNA polymerase II (Pol II) transcription in the promoter-proximal region of genes. The integrator complex provides a quality checkpoint during transcription elongation by driving premature transcription termination of transcripts that are unfavorably configured for transcriptional elongation: the complex terminates transcription by (1) catalyzing dephosphorylation of the C-terminal domain (CTD) of Pol II subunit POLR2A/RPB1 and SUPT5H/SPT5, (2) degrading the exiting nascent RNA transcript via endonuclease activity and (3) promoting the release of Pol II from bound DNA. The integrator complex is also involved in terminating the synthesis of non-coding Pol II transcripts, such as enhancer RNAs (eRNAs), small nuclear RNAs (snRNAs), telomerase RNAs and long non-coding RNAs (lncRNAs). May be not involved in the recruitment of cytoplasmic dynein to the nuclear envelope by different components of the INT complex. Plays a role in DNA damage response (DDR) signaling during the S phase. The sequence is that of Integrator complex subunit 7 from Homo sapiens (Human).